Consider the following 217-residue polypeptide: Homologous-pairing protein 2 homolog (217 aa).

The segment at 89–117 (LDASIMALTAKVQGLQQSCRHMEAELKEL) is interaction with NR3C1, homodimerization and transcriptional activation almost abolished when missing. Positions 93–153 (IMALTAKVQG…LKNIKAATNH (61 aa)) form a coiled coil. Positions 118–182 (TSALTTPEMQ…WRKRKRMTTE (65 aa)) are DNA-binding. Residues 118 to 182 (TSALTTPEMQ…WRKRKRMTTE (65 aa)) are interaction with NR3C1 decreased when missing.

This sequence belongs to the HOP2 family. As to quaternary structure, forms a stable heterodimer with MND1. Interacts with PSMC3/TBP1. Interacts with the DNA-binding domain of the nuclear receptors NR3C1/GR, ESR2/ER-beta, THRB and RXRA. Phosphorylated by PKA, PKC and MAPK.

The protein localises to the nucleus. Functionally, plays an important role in meiotic recombination. Stimulates DMC1-mediated strand exchange required for pairing homologous chromosomes during meiosis. The complex PSMC3IP/MND1 binds DNA, stimulates the recombinase activity of DMC1 as well as DMC1 D-loop formation from double-strand DNA. This complex stabilizes presynaptic RAD51 and DMC1 filaments formed on single strand DNA to capture double-strand DNA. This complex stimulates both synaptic and presynaptic critical steps in RAD51 and DMC1-promoted homologous pairing. May inhibit HIV-1 viral protein TAT activity and modulate the activity of proteasomes through association with PSMC3. Plays a role as a coactivator in nuclear receptor-mediated transcription. The chain is Homologous-pairing protein 2 homolog (Psmc3ip) from Rattus norvegicus (Rat).